Reading from the N-terminus, the 384-residue chain is MASLGAILLFAIASLMHGRPIHSDRKGAKIPLAGSNLGYKKSSNMYGSRLFQGMRYPPSMIQLYQTLILGNDTDLSILEYPVLQESDAVLSFLQKVSCVVVGNRWTLSFDMSSISSTNELKLAELRIRLPSFERPQDVTVEIYHTKKGQENLFMGSFKTNPSVAMGSSWKVFNLTRMLQYYLHQGEQFTNDEYIEVKNLHEGAKPQVIKRRARTEVEEGLQGNKDNTPTSSFPTERVVLVVFTRDKPTANHFGSPSLIHTVESSKYVMSESTVRVADARRHRRNQKTKNTIIMNTIPSRSAGNPLCRRVDMIVDFEKIKWGDRIVYPKRFNAYRCEGACPIPLNETFKPTNHAYIKSLVKLYDQEKVECSSCVPVKMSPLSMLL.

The first 18 residues, 1 to 18, serve as a signal peptide directing secretion; sequence MASLGAILLFAIASLMHG. The propeptide occupies 19 to 283; it reads RPIHSDRKGA…RVADARRHRR (265 aa). N-linked (GlcNAc...) asparagine glycosylation is found at asparagine 71, asparagine 173, and asparagine 344. Cysteines 306 and 372 form a disulfide.

Belongs to the TGF-beta family. In terms of assembly, homodimer; disulfide-linked. Forms heterodimers with the TGF-beta family member derriere. Interacts with tsku; enhances nodal2 activity.

Its subcellular location is the secreted. Functionally, cooperation and regulatory loops of multiple nodals are essential for mesendoderm patterning in early embryos. Essential for mesoderm formation and axial patterning during embryonic development. Activates the activin-like signaling pathway to induce dorsal and ventral mesoderm in animal cap ectoderm. In addition, also dorsalizes ventral marginal zone (VMZ) tissues during gastrulation. Induces muscle actin. Appears to act as both a short-range and long-range morphogen. The unprocessed protein inhibits bmp- and wnt-signaling. This is Nodal homolog 2-B (nodal2-b) from Xenopus laevis (African clawed frog).